The chain runs to 324 residues: Probable UDP-sugar transporter protein SLC35A4 (324 aa).

The Cytoplasmic segment spans residues 1–18 (MSVEDGGVPGLGRPRKAR). The helical transmembrane segment at 19–39 (WTLMLLLSTAMYGAHAPLLAL) threads the bilayer. Residues 40–52 (CHVDGRVPFRPSS) lie on the Lumenal side of the membrane. The helical transmembrane segment at 53–73 (AVLLTELTKLLLCALSLLVGW) threads the bilayer. The Cytoplasmic segment spans residues 74 to 85 (QAWPQGTPPWRQ). A helical transmembrane segment spans residues 86-106 (AAPFALSALLYGANNNLVIYL). The Lumenal portion of the chain corresponds to 107 to 141 (QRYMDPSTYQVLSNLKIGSTALFYCLCLRHRLSAR). Residues 142–162 (QGLALLLLMAAGACYAAGGLQ) form a helical membrane-spanning segment. Residues 163–180 (DPGTTLPGPPSAAATSPM) lie on the Cytoplasmic side of the membrane. Residues 181–201 (PLHITPLGLLLLILYCLISGL) form a helical membrane-spanning segment. The Lumenal portion of the chain corresponds to 202–214 (SSVYTELLMKRQR). A helical membrane pass occupies residues 215–235 (LPLALQNLFLYSFGVLLNLGL). The Cytoplasmic portion of the chain corresponds to 236-248 (HAGGGPGPGLLEG). The chain crosses the membrane as a helical span at residues 249–271 (FSGWMALVVLSQALNGLLMSAVM). Residues 272–275 (KHGS) are Lumenal-facing. A helical membrane pass occupies residues 276-298 (SITRLFVVSCSLVVNAVLSAALL). Residues 299–324 (RLQLTAAFFLATLLIGLAVRLYYGSR) lie on the Cytoplasmic side of the membrane.

This sequence belongs to the nucleotide-sugar transporter family. SLC35A subfamily. In terms of assembly, found in a complex with SLC35A2 and SLC35A3.

It localises to the golgi apparatus membrane. It carries out the reaction CDP-L-ribitol(in) + CDP(out) = CDP-L-ribitol(out) + CDP(in). Functionally, mediates the transport of CDP-ribitol. Does not exhibit CMP-sialic acid, UDP-galactose and UDP-N-acetylglucosamine transport activity. The chain is Probable UDP-sugar transporter protein SLC35A4 from Bos taurus (Bovine).